The following is an 88-amino-acid chain: Small ribosomal subunit protein bS20 (88 aa).

This sequence belongs to the bacterial ribosomal protein bS20 family.

Binds directly to 16S ribosomal RNA. This Mycoplasmopsis synoviae (strain 53) (Mycoplasma synoviae) protein is Small ribosomal subunit protein bS20.